The chain runs to 415 residues: Serine--tRNA ligase (415 aa).

An L-serine-binding site is contributed by 231-233; sequence TAE. 262–264 provides a ligand contact to ATP; it reads RSE. Glutamate 285 provides a ligand contact to L-serine. ATP is bound at residue 349–352; sequence EISS. Serine 383 provides a ligand contact to L-serine.

This sequence belongs to the class-II aminoacyl-tRNA synthetase family. Type-1 seryl-tRNA synthetase subfamily. In terms of assembly, homodimer. The tRNA molecule binds across the dimer.

Its subcellular location is the cytoplasm. It catalyses the reaction tRNA(Ser) + L-serine + ATP = L-seryl-tRNA(Ser) + AMP + diphosphate + H(+). The enzyme catalyses tRNA(Sec) + L-serine + ATP = L-seryl-tRNA(Sec) + AMP + diphosphate + H(+). It participates in aminoacyl-tRNA biosynthesis; selenocysteinyl-tRNA(Sec) biosynthesis; L-seryl-tRNA(Sec) from L-serine and tRNA(Sec): step 1/1. Catalyzes the attachment of serine to tRNA(Ser). Is also able to aminoacylate tRNA(Sec) with serine, to form the misacylated tRNA L-seryl-tRNA(Sec), which will be further converted into selenocysteinyl-tRNA(Sec). The chain is Serine--tRNA ligase from Helicobacter pylori (strain J99 / ATCC 700824) (Campylobacter pylori J99).